An 812-amino-acid polypeptide reads, in one-letter code: Lon protease (812 aa).

The region spanning 11-204 (IPVLPLRDVV…YLMAMMESEI (194 aa)) is the Lon N-terminal domain. 356 to 363 (GPPGVGKT) is a binding site for ATP. The Lon proteolytic domain occupies 592 to 773 (ENRVGQVTGL…EEEQTLSLQN (182 aa)). Active-site residues include S679 and K722. Residues 745–764 (KENPDNAKADQDRHPVKNNE) show a composition bias toward basic and acidic residues. Positions 745–766 (KENPDNAKADQDRHPVKNNEEE) are disordered.

This sequence belongs to the peptidase S16 family. As to quaternary structure, homohexamer. Organized in a ring with a central cavity. ATP binding and hydrolysis do not affect the oligomeric state of the enzyme.

The protein localises to the cytoplasm. The catalysed reaction is Hydrolysis of proteins in presence of ATP.. With respect to regulation, contains an allosteric site (distinct from its active site), whose occupancy by an unfolded polypeptide leads to enzyme activation. Its function is as follows. ATP-dependent serine protease that mediates the selective degradation of mutant and abnormal proteins as well as certain short-lived regulatory proteins. Required for cellular homeostasis and for survival from DNA damage and developmental changes induced by stress. Degrades polypeptides processively to yield small peptide fragments that are 5 to 10 amino acids long. Binds to DNA in a double-stranded, site-specific manner. Endogenous substrates include the regulatory proteins RcsA and SulA, the transcriptional activator SoxS, and UmuD. Its overproduction specifically inhibits translation through at least two different pathways, one of them being the YoeB-YefM toxin-antitoxin system. The chain is Lon protease from Shigella dysenteriae serotype 1 (strain Sd197).